The primary structure comprises 653 residues: Potassium voltage-gated channel subfamily A member 4 (653 aa).

At methionine 1–serine 304 the chain is on the cytoplasmic side. A disordered region spans residues glutamine 24 to glycine 148. The span at serine 36–glutamate 52 shows a compositional bias: low complexity. Residues glycine 81–tyrosine 97 show a composition bias toward basic residues. The residue at position 90 (serine 90) is a Phosphoserine; by PKA. At serine 122 the chain carries Phosphoserine. Acidic residues predominate over residues serine 122–glutamate 137. A helical transmembrane segment spans residues proline 305–leucine 326. Over glutamate 327–proline 370 the chain is Extracellular. The N-linked (GlcNAc...) asparagine glycan is linked to asparagine 352. A helical membrane pass occupies residues phenylalanine 371–alanine 392. The Cytoplasmic portion of the chain corresponds to cysteine 393 to isoleucine 403. Residues methionine 404–alanine 424 traverse the membrane as a helical segment. Over glutamine 425–serine 439 the chain is Extracellular. A helical; Voltage-sensor membrane pass occupies residues phenylalanine 440–histidine 460. The Cytoplasmic portion of the chain corresponds to serine 461–methionine 475. Residues lysine 462 to methionine 475 form an S4-S5 linker region. A helical transmembrane segment spans residues arginine 476–tyrosine 497. Residues phenylalanine 498–isoleucine 511 lie on the Extracellular side of the membrane. An intramembrane region (helical) is located at residues proline 512–threonine 523. The Selectivity filter motif lies at threonine 524–aspartate 529. Residues threonine 524–lysine 531 lie within the membrane without spanning it. Residues proline 532–lysine 538 are Extracellular-facing. Residues isoleucine 539–tyrosine 567 form a helical membrane-spanning segment. The Cytoplasmic portion of the chain corresponds to histidine 568–valine 653. The residue at position 599 (serine 599) is a Phosphoserine; by PKA. Over residues cysteine 629–lysine 640 the composition is skewed to basic and acidic residues. The tract at residues cysteine 629 to valine 653 is disordered. Positions threonine 651–valine 653 match the PDZ-binding motif.

It belongs to the potassium channel family. A (Shaker) (TC 1.A.1.2) subfamily. Kv1.4/KCNA4 sub-subfamily. As to quaternary structure, homotetramer and heterotetramer of potassium channel proteins. Interacts with KCNAB1 and KCNAB2. Interacts with DLG1, DLG2 and DLG4 via their PDZ domains. Interacts with SIGMAR1. Detected in a complex with KCNA1. Interacts with KCNA2. Part of a complex containing KCNA1, KCNAB1 and LGI1. Interacts (via cytoplasmic N-terminal domain) with KCNRG. In terms of tissue distribution, expressed in brain, and at lower levels in the testis, lung, kidney, colon and heart. Detected in heart ventricle.

The protein localises to the cell membrane. It is found in the cell projection. Its subcellular location is the axon. The catalysed reaction is K(+)(in) = K(+)(out). Its activity is regulated as follows. Inhibited by 4-aminopyridine (4-AP), but not by tetraethylammonium (TEA) and charybdotoxin (CTX). Functionally, voltage-gated potassium channel that mediates transmembrane potassium transport in excitable membranes. Forms tetrameric potassium-selective channels through which potassium ions pass in accordance with their electrochemical gradient. The channel alternates between opened and closed conformations in response to the voltage difference across the membrane. Can form functional homotetrameric channels and heterotetrameric channels that contain variable proportions of KCNA1, KCNA2, KCNA4, KCNA5, and possibly other family members as well; channel properties depend on the type of alpha subunits that are part of the channel. Channel properties are modulated by cytoplasmic beta subunits that regulate the subcellular location of the alpha subunits and promote rapid inactivation. In vivo, membranes probably contain a mixture of heteromeric potassium channel complexes, making it difficult to assign currents observed in intact tissues to any particular potassium channel family member. Homotetrameric KCNA4 forms a potassium channel that opens in response to membrane depolarization, followed by rapid spontaneous channel closure. Likewise, a heterotetrameric channel formed by KCNA1 and KCNA4 shows rapid inactivation. This is Potassium voltage-gated channel subfamily A member 4 (KCNA4) from Homo sapiens (Human).